Consider the following 220-residue polypeptide: UPF0319 protein Asuc_1002 (220 aa).

An N-terminal signal peptide occupies residues 1 to 21 (MKFRLAAVAAAALLASSASFA).

Belongs to the UPF0319 family.

This Actinobacillus succinogenes (strain ATCC 55618 / DSM 22257 / CCUG 43843 / 130Z) protein is UPF0319 protein Asuc_1002.